The sequence spans 109 residues: Cysteine-rich venom protein 7 (109 aa).

The first 21 residues, M1 to A21, serve as a signal peptide directing secretion. Disulfide bonds link C30/C47, C37/C52, C46/C58, C70/C90, and C78/C98.

In terms of tissue distribution, expressed by the venom gland.

The protein resides in the secreted. This Pimpla hypochondriaca (Parasitoid wasp) protein is Cysteine-rich venom protein 7.